Here is a 248-residue protein sequence, read N- to C-terminus: Allergin-1 (248 aa).

The first 33 residues, Met-1 to Ser-33, serve as a signal peptide directing secretion. Residues Ile-34–Ser-150 lie on the Extracellular side of the membrane. An Ig-like C2-type domain is found at Pro-54–Thr-137. N-linked (GlcNAc...) asparagine glycosylation occurs at Asn-68. Cysteines 73 and 120 form a disulfide. N-linked (GlcNAc...) asparagine glycosylation occurs at Asn-135. Residues Leu-151–Leu-171 form a helical membrane-spanning segment. The Cytoplasmic segment spans residues Lys-172–Tyr-248. Short sequence motifs (ITIM motif) lie at residues Ile-216–Pro-221 and Tyr-241–Leu-246. 2 positions are modified to phosphotyrosine: Tyr-218 and Tyr-243.

Monomer. Interacts (tyrosine-phosphorylated) with PTPN6, PTPN11 and INPP5D. N-glycosylated. In terms of tissue distribution, mast cell-specific. Expressed in primary and transformed mast cells.

It localises to the cell membrane. In terms of biological role, immunoglobulin-like receptor which plays an inhibitory role in degranulation of mast cells. Negatively regulates IgE-mediated mast cell activation and suppresses the type I immediate hypersensitivity reaction. The protein is Allergin-1 (Milr1) of Rattus norvegicus (Rat).